The chain runs to 126 residues: Small ribosomal subunit protein uS13 (126 aa).

The segment at 96-126 (PVRGQRTRTNARTRRGSRRTVAGKKKPAAKK) is disordered. Basic residues predominate over residues 100 to 126 (QRTRTNARTRRGSRRTVAGKKKPAAKK).

Belongs to the universal ribosomal protein uS13 family. Part of the 30S ribosomal subunit. Forms a loose heterodimer with protein S19. Forms two bridges to the 50S subunit in the 70S ribosome.

Located at the top of the head of the 30S subunit, it contacts several helices of the 16S rRNA. In the 70S ribosome it contacts the 23S rRNA (bridge B1a) and protein L5 of the 50S subunit (bridge B1b), connecting the 2 subunits; these bridges are implicated in subunit movement. Contacts the tRNAs in the A and P-sites. In Thermosynechococcus vestitus (strain NIES-2133 / IAM M-273 / BP-1), this protein is Small ribosomal subunit protein uS13.